The following is a 112-amino-acid chain: UPF0060 membrane protein SCO3297 (112 aa).

4 helical membrane-spanning segments follow: residues 8–28 (ALFVVAALFEIGGAWLVWQGV), 33–53 (GWLWAAGGVLALGAYGFVATF), 62–82 (ILAAYGGIFVTGSILWGVVAD), and 88–108 (RWDIAGALVCLAGMALIMWAP).

The protein belongs to the UPF0060 family.

It localises to the cell membrane. The sequence is that of UPF0060 membrane protein SCO3297 from Streptomyces coelicolor (strain ATCC BAA-471 / A3(2) / M145).